A 103-amino-acid chain; its full sequence is Large ribosomal subunit protein uL24 (103 aa).

This sequence belongs to the universal ribosomal protein uL24 family. Part of the 50S ribosomal subunit.

Its function is as follows. One of two assembly initiator proteins, it binds directly to the 5'-end of the 23S rRNA, where it nucleates assembly of the 50S subunit. One of the proteins that surrounds the polypeptide exit tunnel on the outside of the subunit. This is Large ribosomal subunit protein uL24 from Exiguobacterium sibiricum (strain DSM 17290 / CCUG 55495 / CIP 109462 / JCM 13490 / 255-15).